We begin with the raw amino-acid sequence, 240 residues long: Pyridoxine 5'-phosphate synthase (240 aa).

Position 7 (asparagine 7) interacts with 3-amino-2-oxopropyl phosphate. Position 9–10 (9–10 (DH)) interacts with 1-deoxy-D-xylulose 5-phosphate. Residue arginine 18 participates in 3-amino-2-oxopropyl phosphate binding. The active-site Proton acceptor is the histidine 43. Arginine 45 and histidine 50 together coordinate 1-deoxy-D-xylulose 5-phosphate. Residue glutamate 70 is the Proton acceptor of the active site. Threonine 100 serves as a coordination point for 1-deoxy-D-xylulose 5-phosphate. The Proton donor role is filled by histidine 191. 3-amino-2-oxopropyl phosphate contacts are provided by residues glycine 192 and 213–214 (GH).

It belongs to the PNP synthase family. As to quaternary structure, homooctamer; tetramer of dimers.

It localises to the cytoplasm. The catalysed reaction is 3-amino-2-oxopropyl phosphate + 1-deoxy-D-xylulose 5-phosphate = pyridoxine 5'-phosphate + phosphate + 2 H2O + H(+). It functions in the pathway cofactor biosynthesis; pyridoxine 5'-phosphate biosynthesis; pyridoxine 5'-phosphate from D-erythrose 4-phosphate: step 5/5. Its function is as follows. Catalyzes the complicated ring closure reaction between the two acyclic compounds 1-deoxy-D-xylulose-5-phosphate (DXP) and 3-amino-2-oxopropyl phosphate (1-amino-acetone-3-phosphate or AAP) to form pyridoxine 5'-phosphate (PNP) and inorganic phosphate. The polypeptide is Pyridoxine 5'-phosphate synthase (Synechococcus elongatus (strain ATCC 33912 / PCC 7942 / FACHB-805) (Anacystis nidulans R2)).